Consider the following 4655-residue polypeptide: Low-density lipoprotein receptor-related protein 2 (4655 aa).

The N-terminal stretch at 1–25 is a signal peptide; the sequence is MDRGPAAVACTLLLALVACLAPASG. Residues 26 to 4423 are Extracellular-facing; it reads QECDSAHFRC…FSKGISPGTT (4398 aa). 7 consecutive LDL-receptor class A domains span residues 27-63, 66-104, 107-143, 146-180, 182-218, 221-257, and 265-308; these read ECDS…IGCA, TCQQ…QDCS, TCSS…NDCQ, TCEQ…INCT, ICLH…HACN, TCGG…DGCE, and KCSP…KYCS. 21 cysteine pairs are disulfide-bonded: C28–C40, C35–C53, C47–C62, C67–C80, C74–C93, C87–C103, C108–C120, C115–C133, C127–C142, C147–C157, C152–C170, C164–C179, C183–C195, C190–C208, C202–C217, C222–C234, C229–C247, C241–C256, C266–C279, C273–C292, and C286–C307. N-linked (GlcNAc...) asparagine glycosylation is found at N159 and N178. N-linked (GlcNAc...) asparagine glycosylation is found at N299, N300, N341, N388, and N463. 8 LDL-receptor class B repeats span residues 436–478, 479–521, 522–568, 569–613, 753–795, 796–837, 838–881, and 882–925; these read QRVF…DWVN, NKIY…DPTV, GYLF…DMIS, KRVY…FEGQ, STIF…DWIS, KNLY…HPFA, GYLF…DWAA, and SRLY…FGEH. An N-linked (GlcNAc...) asparagine glycan is attached at N866. The region spanning 1025-1061 is the LDL-receptor class A 8 domain; that stretch reads QCGLFSFPCKNGRCVPNYYLCDGVDDCHDNSDEQLCG. 3 disulfides stabilise this stretch: C1026–C1038, C1033–C1051, and C1045–C1060. An N-linked (GlcNAc...) asparagine glycan is attached at N1064. LDL-receptor class A domains lie at 1066 to 1102, 1108 to 1144, 1148 to 1184, 1186 to 1223, 1229 to 1267, 1270 to 1306, and 1304 to 1349; these read TCSS…HNCP, SCLD…KNCN, TCQP…VGCV, NCTA…AGCP, MCHS…NACV, TCPS…KDCP, and DCPT…PLCN. Disulfide bonds link C1067/C1079, C1074/C1092, C1086/C1101, C1109/C1121, C1116/C1134, and C1128/C1143. The Ca(2+) site is built by W1126, D1129, D1131, D1133, D1139, and E1140. N-linked (GlcNAc...) asparagine glycosylation is present at N1144. 3 disulfide bridges follow: C1149-C1161, C1156-C1174, and C1168-C1183. N1186 carries N-linked (GlcNAc...) asparagine glycosylation. 12 disulfides stabilise this stretch: C1187–C1200, C1194–C1213, C1207–C1222, C1230–C1243, C1237–C1256, C1250–C1266, C1271–C1283, C1278–C1296, C1290–C1305, C1305–C1325, C1312–C1338, and C1332–C1348. 5 residues coordinate Ca(2+): D1208, V1210, D1212, D1218, and E1219. N1327, N1340, and N1383 each carry an N-linked (GlcNAc...) asparagine glycan. The 40-residue stretch at 1390–1429 folds into the EGF-like 1; calcium-binding domain; that stretch reads DIDECDILGSCSQHCYNMRGSFRCSCDTGYMLESDGRTCK. 3 disulfide bridges follow: C1394/C1404, C1400/C1413, and C1415/C1428. N-linked (GlcNAc...) asparagine glycans are attached at residues N1464, N1496, and N1550. LDL-receptor class B repeat units lie at residues 1478 to 1520, 1521 to 1563, 1566 to 1609, 1610 to 1654, and 1655 to 1695; these read GRIF…DWVG, RNLY…DPRM, HLLF…DYPN, RLLY…FEDS, and VYWT…VHPS. N1675 carries N-linked (GlcNAc...) asparagine glycosylation. Positions 1700-1741 constitute an EGF-like 2 domain; that stretch reads SVNPCAFSRCSHLCLLSSQGPHFYSCVCPSGWSLSPDLLNCL. Disulfide bonds link C1704–C1713, C1709–C1725, and C1727–C1740. LDL-receptor class B repeat units follow at residues 1790–1832, 1833–1882, 1883–1930, 1931–1972, and 1973–2013; these read QYIY…DWIS, RNLY…DPAR, GKLY…DIEE, QKLY…HDSF, and LYYT…YHRR. A glycan (N-linked (GlcNAc...) asparagine) is linked at N1810. N-linked (GlcNAc...) asparagine glycosylation is present at N2055. LDL-receptor class B repeat units lie at residues 2107 to 2156, 2157 to 2201, 2202 to 2245, 2246 to 2289, 2431 to 2477, 2478 to 2518, 2519 to 2562, 2563 to 2604, and 2605 to 2646; these read GFIY…DWVA, GNLY…DPKN, RYLF…DRSD, GYVY…FENS, DRIY…DWIT, RRIY…DPCQ, GYLY…DYEE, DLLY…YGQY, and IYWT…VVKN. Residues N2177 and N2224 are each glycosylated (N-linked (GlcNAc...) asparagine). N-linked (GlcNAc...) asparagine glycosylation is found at N2499 and N2547. LDL-receptor class A domains follow at residues 2699–2737, 2740–2776, 2779–2818, 2821–2860, 2863–2900, 2905–2944, 2947–2989, 2992–3028, 3031–3069, and 3074–3110; these read RCGA…SVCA, TCSP…AGCL, DCNA…KNCP, TCQS…TYCT, TCSS…ASCG, TCLA…HQCQ, NCSD…QNCT, TCSE…RGCL, TCQQ…HLCH, and TCPP…KGCG. 18 cysteine pairs are disulfide-bonded: C2700-C2712, C2707-C2725, C2719-C2736, C2741-C2753, C2748-C2766, C2760-C2775, C2780-C2793, C2788-C2806, C2800-C2817, C2822-C2835, C2829-C2848, C2842-C2859, C2864-C2876, C2871-C2889, C2883-C2899, C2906-C2918, C2913-C2931, and C2925-C2943. The N-linked (GlcNAc...) asparagine glycan is linked to N2781. N2809 and N2810 each carry an N-linked (GlcNAc...) asparagine glycan. N2947 is a glycosylation site (N-linked (GlcNAc...) asparagine). Intrachain disulfides connect C2948-C2965, C2955-C2978, C2972-C2988, C2993-C3005, C3000-C3018, C3012-C3027, C3032-C3044, C3039-C3057, C3051-C3068, C3075-C3087, C3082-C3100, C3094-C3109, C3114-C3126, C3122-C3135, C3137-C3150, C3156-C3167, C3163-C3176, and C3178-C3191. A glycan (N-linked (GlcNAc...) asparagine) is linked at N2987. One can recognise an EGF-like 3 domain in the interval 3110–3151; it reads GINECHDPSISGCDHNCTDTLTSFYCSCRPGYKLMSDKRTCV. The N-linked (GlcNAc...) asparagine glycan is linked to N3125. The EGF-like 4; calcium-binding domain occupies 3152 to 3192; that stretch reads DIDECTEMPFVCSQKCENVIGSYICKCAPGYLREPDGKTCR. N-linked (GlcNAc...) asparagine glycosylation is found at N3211, N3257, N3315, and N3355. LDL-receptor class B repeat units follow at residues 3239 to 3281, 3282 to 3324, 3333 to 3376, 3377 to 3419, and 3420 to 3460; these read KRLY…DWVS, RKLY…DNPR, GYLY…DYTN, DLLY…FEDT, and IYWT…YHPY. The N-linked (GlcNAc...) asparagine glycan is linked to N3446. 11 LDL-receptor class A domains span residues 3511–3549, 3552–3590, 3593–3631, 3634–3672, 3677–3715, 3718–3755, 3758–3794, 3797–3833, 3841–3879, 3882–3921, and 3927–3963; these read MCSS…ALCP, FCRL…LLCE, HCDS…SHCA, TCRP…EECM, LCDN…QGCE, TCHP…ENCA, ECTE…RDCE, TCHP…ADCP, YCQA…HLCL, PCNS…EHCR, and PCTE…LGCN. 33 disulfide bridges follow: C3512-C3525, C3519-C3538, C3532-C3548, C3553-C3565, C3560-C3578, C3572-C3589, C3594-C3606, C3601-C3619, C3613-C3630, C3635-C3647, C3642-C3660, C3654-C3671, C3678-C3692, C3686-C3705, C3699-C3714, C3719-C3732, C3727-C3745, C3739-C3754, C3759-C3771, C3766-C3784, C3778-C3793, C3798-C3810, C3805-C3823, C3817-C3832, C3842-C3854, C3849-C3867, C3861-C3878, C3883-C3896, C3891-C3909, C3903-C3920, C3928-C3940, C3935-C3953, and C3947-C3962. N-linked (GlcNAc...) asparagine glycosylation occurs at N3564. A glycan (N-linked (GlcNAc...) asparagine) is linked at N3680. N3978 is a glycosylation site (N-linked (GlcNAc...) asparagine). Residues 4007-4048 form the EGF-like 5; calcium-binding domain; it reads DINECEQFGTCPQHCRNTKGSYECVCADGFTSMSDRPGKRCA. Disulfide bonds link C4011–C4021, C4017–C4030, and C4032–C4047. A glycan (N-linked (GlcNAc...) asparagine) is linked at N4068. LDL-receptor class B repeat units lie at residues 4154-4196, 4197-4240, and 4242-4283; these read RHIY…NPKL, GLMF…DYLN, and DRIY…FEDQ. Residue N4327 is glycosylated (N-linked (GlcNAc...) asparagine). In terms of domain architecture, EGF-like 6 spans 4377 to 4411; sequence LPPPCRCMHGGNCYFDETDLPKCKCPSGYTGKYCE. 3 cysteine pairs are disulfide-bonded: C4381/C4389, C4383/C4399, and C4401/C4410. Residues 4424-4446 form a helical membrane-spanning segment; sequence AVAVLLTILLIVVIGALAIAGFF. The Cytoplasmic segment spans residues 4447–4655; sequence HYRRTGSLLP…ANLVKEDSEV (209 aa). An SH3-binding motif is present at residues 4453 to 4462; the sequence is SLLPALPKLP. A PxLPxI/L motif 1; mediates interaction with ANKRA2 motif is present at residues 4456 to 4461; sequence PALPKL. The PxLPxI/L motif 2; mediates interaction with ANKRA2 motif lies at 4459–4464; the sequence is PKLPSL. 2 positions are modified to phosphoserine: S4463 and S4466. The short motif at 4521-4526 is the Endocytosis signal element; the sequence is FENPMY. The disordered stretch occupies residues 4550-4574; the sequence is KNYGSPINPSEIVPETNPTSPAADG. A compositionally biased stretch (polar residues) spans 4565-4574; sequence TNPTSPAADG. S4569 carries the phosphoserine modification. Residues 4589–4602 form an interaction with DAB2 region; sequence QTTNFENPIYAQME. The short motif at 4595 to 4598 is the NPXY motif element; that stretch reads NPIY. Residues 4598-4601 carry the SH2-binding motif; sequence YAQM. Residues 4601–4655 are disordered; that stretch reads MENEQKESVAATPPPSPSLPAKPKPPSRRDPTPTYSATEDTFKDTANLVKEDSEV. Positions 4611–4622 match the SH3-binding motif; sequence ATPPPSPSLPAK. Residues 4612–4624 show a composition bias toward pro residues; the sequence is TPPPSPSLPAKPK. At S4616 the chain carries Phosphoserine. T4632 carries the phosphothreonine modification. A Phosphoserine modification is found at S4653.

The protein belongs to the LDLR family. Binds plasminogen, extracellular matrix components, plasminogen activator-plasminogen activator inhibitor type I complex, apolipoprotein E-enriched beta-VLDL, lipoprotein lipase, lactoferrin, CLU/clusterin and calcium. Forms a multimeric complex together with LRPAP1. Interacts (via PxLPxI/L motif) with ANKRA2 (via ankyrin repeats). Interacts with LRP2BP. Interacts (via NPXY motif) with DAB2; the interaction is not affected by tyrosine phosphorylation of the NPXY motif. Interacts with MB. Interacts with BMP4. Interacts with the Sonic hedgehog protein N-product which is the active product of SHH. Interacts with CST3 in a calcium-dependent manner. Interacts with the vitamin-D binding protein GC/DBP. Interacts with sex hormone-binding protein SHBG. Interacts with angiotensin-2. Also interacts with angiotensin 1-7. Interacts with APOM. Interacts with selenoprotein SEPP1. Interacts with LEP. Interacts with ALB. Interacts with the antiapoptotic protein BIRC5/survivin. Interacts with matrix metalloproteinase MMP2 in complex with metalloproteinase inhibitor TIMP1. In neurons, forms a trimeric complex with APP and APPB1/FE65. Interacts with LDLRAP1/ARH; mediates trafficking of LRP2 to the endocytic recycling compartment. Does not interact with beta-amyloid protein 40 alone but interacts with the complex composed of beta-amyloid protein 40 and CLU/APOJ. Interacts with MDK. Post-translationally, a fraction undergoes proteolytic cleavage of the extracellular domain at the cell membrane to generate a cytoplasmic tail fragment. This is internalized into the early endosome from where it trafficks in an LDLRAP1/ARH-dependent manner to the endocytic recycling compartment (ERC). In the ERC, it is further cleaved by gamma-secretase to release a fragment which translocates to the nucleus and mediates transcriptional repression. In terms of processing, N-glycosylation is required for ligand binding. As to expression, expressed in first and third trimester cytotrophoblasts in the placenta (at protein level). Absorptive epithelia, including renal proximal tubules.

It is found in the apical cell membrane. The protein resides in the endosome lumen. It localises to the membrane. Its subcellular location is the coated pit. The protein localises to the cell projection. It is found in the dendrite. The protein resides in the axon. Functionally, multiligand endocytic receptor. Acts together with CUBN to mediate endocytosis of high-density lipoproteins. Mediates receptor-mediated uptake of polybasic drugs such as aprotinin, aminoglycosides and polymyxin B. In the kidney, mediates the tubular uptake and clearance of leptin. Also mediates transport of leptin across the blood-brain barrier through endocytosis at the choroid plexus epithelium. Endocytosis of leptin in neuronal cells is required for hypothalamic leptin signaling and leptin-mediated regulation of feeding and body weight. Mediates endocytosis and subsequent lysosomal degradation of CST3 in kidney proximal tubule cells. Mediates renal uptake of 25-hydroxyvitamin D3 in complex with the vitamin D3 transporter GC/DBP. Mediates renal uptake of metallothionein-bound heavy metals. Together with CUBN, mediates renal reabsorption of myoglobin. Mediates renal uptake and subsequent lysosomal degradation of APOM. Plays a role in kidney selenium homeostasis by mediating renal endocytosis of selenoprotein SEPP1. Mediates renal uptake of the antiapoptotic protein BIRC5/survivin which may be important for functional integrity of the kidney. Mediates renal uptake of matrix metalloproteinase MMP2 in complex with metalloproteinase inhibitor TIMP1. Mediates endocytosis of Sonic hedgehog protein N-product (ShhN), the active product of SHH. Also mediates ShhN transcytosis. In the embryonic neuroepithelium, mediates endocytic uptake and degradation of BMP4, is required for correct SHH localization in the ventral neural tube and plays a role in patterning of the ventral telencephalon. Required at the onset of neurulation to sequester SHH on the apical surface of neuroepithelial cells of the rostral diencephalon ventral midline and to control PTCH1-dependent uptake and intracellular trafficking of SHH. During neurulation, required in neuroepithelial cells for uptake of folate bound to the folate receptor FOLR1 which is necessary for neural tube closure. In the adult brain, negatively regulates BMP signaling in the subependymal zone which enables neurogenesis to proceed. In astrocytes, mediates endocytosis of ALB which is required for the synthesis of the neurotrophic factor oleic acid. Involved in neurite branching. During optic nerve development, required for SHH-mediated migration and proliferation of oligodendrocyte precursor cells. Mediates endocytic uptake and clearance of SHH in the retinal margin which protects retinal progenitor cells from mitogenic stimuli and keeps them quiescent. Plays a role in reproductive organ development by mediating uptake in reproductive tissues of androgen and estrogen bound to the sex hormone binding protein SHBG. Mediates endocytosis of angiotensin-2. Also mediates endocytosis of angiotensis 1-7. Binds to the complex composed of beta-amyloid protein 40 and CLU/APOJ and mediates its endocytosis and lysosomal degradation. Required for embryonic heart development. Required for normal hearing, possibly through interaction with estrogen in the inner ear. This chain is Low-density lipoprotein receptor-related protein 2, found in Homo sapiens (Human).